A 281-amino-acid polypeptide reads, in one-letter code: Phosphatidylglycerol--prolipoprotein diacylglyceryl transferase (281 aa).

4 helical membrane-spanning segments follow: residues 29–49, 64–84, 100–120, and 124–144; these read FYSL…GKMI, LFFY…VLFY, GGMS…FVSW, and LNWL…MFLG. Residue arginine 145 participates in a 1,2-diacyl-sn-glycero-3-phospho-(1'-sn-glycerol) binding. Transmembrane regions (helical) follow at residues 180–200, 209–229, and 248–268; these read QLYQ…LLFW, GVLV…NEFF, and GQWL…YALT.

This sequence belongs to the Lgt family.

It localises to the cell inner membrane. It carries out the reaction L-cysteinyl-[prolipoprotein] + a 1,2-diacyl-sn-glycero-3-phospho-(1'-sn-glycerol) = an S-1,2-diacyl-sn-glyceryl-L-cysteinyl-[prolipoprotein] + sn-glycerol 1-phosphate + H(+). It participates in protein modification; lipoprotein biosynthesis (diacylglyceryl transfer). Catalyzes the transfer of the diacylglyceryl group from phosphatidylglycerol to the sulfhydryl group of the N-terminal cysteine of a prolipoprotein, the first step in the formation of mature lipoproteins. This is Phosphatidylglycerol--prolipoprotein diacylglyceryl transferase from Erythrobacter litoralis (strain HTCC2594).